Here is a 265-residue protein sequence, read N- to C-terminus: Type-1Ba cytolytic delta-endotoxin (265 aa).

Belongs to the cyt1/cyt2 endotoxin family. Post-translationally, active after proteolytic processing.

Its function is as follows. Kills the larvae of dipteran insects by making pores in the epithelial cell membrane of the insect midgut. This chain is Type-1Ba cytolytic delta-endotoxin (cyt1Ba1), found in Bacillus thuringiensis subsp. neoleoensis.